The chain runs to 623 residues: Glutathione import ATP-binding protein GsiA (623 aa).

2 ABC transporter domains span residues 15–269 and 314–564; these read VENL…RALL and LRVR…RKLL. ATP-binding positions include 49-56 and 357-364; these read GESGSGKS.

Belongs to the ABC transporter superfamily. Glutathione importer (TC 3.A.1.5.11) family. As to quaternary structure, the complex is composed of two ATP-binding proteins (GsiA), two transmembrane proteins (GsiC and GsiD) and a solute-binding protein (GsiB).

It localises to the cell inner membrane. The catalysed reaction is glutathione(out) + ATP + H2O = glutathione(in) + ADP + phosphate + H(+). Inhibited by verapamil but not by carbonyl cyanide m-chlorophenylhydrazone (CCCP). Functionally, part of the ABC transporter complex GsiABCD involved in glutathione import. Responsible for energy coupling to the transport system. This chain is Glutathione import ATP-binding protein GsiA, found in Escherichia coli (strain K12).